The primary structure comprises 568 residues: Phosphomethylpyrimidine synthase (568 aa).

Substrate is bound by residues Asn188, Met217, Tyr246, His282, 302–304 (SRG), 343–346 (DGLR), and Glu382. His386 lines the Zn(2+) pocket. Tyr409 serves as a coordination point for substrate. His450 is a binding site for Zn(2+). Residues Cys530, Cys533, and Cys538 each contribute to the [4Fe-4S] cluster site.

This sequence belongs to the ThiC family. In terms of assembly, homodimer. It depends on [4Fe-4S] cluster as a cofactor.

The catalysed reaction is 5-amino-1-(5-phospho-beta-D-ribosyl)imidazole + S-adenosyl-L-methionine = 4-amino-2-methyl-5-(phosphooxymethyl)pyrimidine + CO + 5'-deoxyadenosine + formate + L-methionine + 3 H(+). The protein operates within cofactor biosynthesis; thiamine diphosphate biosynthesis. Its function is as follows. Catalyzes the synthesis of the hydroxymethylpyrimidine phosphate (HMP-P) moiety of thiamine from aminoimidazole ribotide (AIR) in a radical S-adenosyl-L-methionine (SAM)-dependent reaction. In Idiomarina loihiensis (strain ATCC BAA-735 / DSM 15497 / L2-TR), this protein is Phosphomethylpyrimidine synthase.